Consider the following 255-residue polypeptide: Putative enoyl-CoA hydratase/isomerase YhaR (255 aa).

Helical transmembrane passes span 96–116 (VTIA…ALCA) and 126–146 (VLAM…HYLL).

Belongs to the enoyl-CoA hydratase/isomerase family.

It is found in the cell membrane. This chain is Putative enoyl-CoA hydratase/isomerase YhaR (yhaR), found in Bacillus subtilis (strain 168).